The sequence spans 138 residues: Beta-galactosidase (138 aa).

The protein belongs to the glycosyl hydrolase 2 family.

The enzyme catalyses Hydrolysis of terminal non-reducing beta-D-galactose residues in beta-D-galactosides.. In Rhizobium radiobacter (Agrobacterium tumefaciens), this protein is Beta-galactosidase (lacZ).